Consider the following 402-residue polypeptide: Phosphoglycerate kinase (402 aa).

Substrate is bound by residues 29–31, arginine 45, 69–72, arginine 125, and arginine 158; these read DFN and HLGR. Residues lysine 209, glutamate 331, and 357-360 each bind ATP; that span reads GGDT.

The protein belongs to the phosphoglycerate kinase family.

Its subcellular location is the cytoplasm. The catalysed reaction is (2R)-3-phosphoglycerate + ATP = (2R)-3-phospho-glyceroyl phosphate + ADP. Its pathway is carbohydrate degradation; glycolysis; pyruvate from D-glyceraldehyde 3-phosphate: step 2/5. The chain is Phosphoglycerate kinase (pgk) from Helicobacter pylori (strain ATCC 700392 / 26695) (Campylobacter pylori).